The chain runs to 91 residues: Mercuric transport protein periplasmic component (91 aa).

The signal sequence occupies residues 1-19 (MKKLFAALALAAVVAPVWA). In terms of domain architecture, HMA spans 22-88 (QTVTLSVPGM…ATGDAGYPSS (67 aa)). 2 residues coordinate Hg(2+): Cys-33 and Cys-36.

The protein belongs to the MerP family. Monomer.

Its subcellular location is the periplasm. Its function is as follows. Involved in mercury resistance. Acts as a mercury scavenger that specifically binds to a mercuric ion in the periplasm and probably passes it to the cytoplasmic mercuric reductase MerA via the mercuric transport protein MerT. This chain is Mercuric transport protein periplasmic component (merP), found in Alcaligenes sp.